Here is a 430-residue protein sequence, read N- to C-terminus: Maintenance of mitochondrial morphology protein 1 (430 aa).

Topologically, residues 1-82 (MTEIDPNINE…ISNTWNFTQG (82 aa)) are lumenal. Residues 83 to 103 (LVVGQLSVIFLIIIFVKFFVF) form a helical membrane-spanning segment. The Cytoplasmic segment spans residues 104–430 (ADSSSSIPSK…AKPKDSDDTL (327 aa)). 2 stretches are compositionally biased toward basic and acidic residues: residues 126–138 (RDNK…DRHN) and 335–346 (ENGKGSSSEDKK). Disordered stretches follow at residues 126–154 (RDNK…TDDE) and 315–346 (QADQ…EDKK). In terms of domain architecture, SMP-LTD spans 178 to 408 (ASESLDWFNV…EPRFQVVKLP (231 aa)).

The protein belongs to the MMM1 family. As to quaternary structure, homodimer. Component of the ER-mitochondria encounter structure (ERMES) or MDM complex, composed of MMM1, MDM10, MDM12 and MDM34. An MMM1 homodimer associates with one molecule of MDM12 on each side in a pairwise head-to-tail manner, and the SMP-LTD domains of MMM1 and MDM12 generate a continuous hydrophobic tunnel for phospholipid trafficking.

The protein resides in the endoplasmic reticulum membrane. Its function is as follows. Component of the ERMES/MDM complex, which serves as a molecular tether to connect the endoplasmic reticulum (ER) and mitochondria. Components of this complex are involved in the control of mitochondrial shape and protein biogenesis, and function in nonvesicular lipid trafficking between the ER and mitochondria. The MDM12-MMM1 subcomplex functions in the major beta-barrel assembly pathway that is responsible for biogenesis of all outer membrane beta-barrel proteins, and acts in a late step after the SAM complex. The MDM10-MDM12-MMM1 subcomplex further acts in the TOM40-specific pathway after the action of the MDM12-MMM1 complex. Essential for establishing and maintaining the structure of mitochondria and maintenance of mtDNA nucleoids. The chain is Maintenance of mitochondrial morphology protein 1 from Lodderomyces elongisporus (strain ATCC 11503 / CBS 2605 / JCM 1781 / NBRC 1676 / NRRL YB-4239) (Yeast).